A 199-amino-acid polypeptide reads, in one-letter code: Ribonuclease P protein subunit p25 (199 aa).

Positions methionine 1 to glutamate 11 are enriched in basic and acidic residues. Disordered regions lie at residues methionine 1–leucine 31 and proline 146–alanine 199. At serine 172 the chain carries Phosphoserine. Over residues proline 190 to alanine 199 the composition is skewed to acidic residues.

Belongs to the histone-like Alba family. In terms of assembly, component of nuclear RNase P and RNase MRP ribonucleoproteins. RNase P consists of a catalytic RNA moiety and 10 different protein chains; POP1, POP4, POP5, POP7, RPP14, RPP21, RPP25, RPP30, RPP38 and RPP40. Within the RNase P complex, POP1, POP7 and RPP25 form the 'finger' subcomplex, POP5, RPP14, RPP40 and homodimeric RPP30 form the 'palm' subcomplex, and RPP21, POP4 and RPP38 form the 'wrist' subcomplex. All subunits of the RNase P complex interact with the catalytic RNA. Several subunits of RNase P are also part of the RNase MRP complex. RNase MRP consists of a catalytic RNA moiety and about 8 protein subunits; POP1, POP7, RPP25, RPP30, RPP38, RPP40 and possibly also POP4 and POP5. POP7 forms a heterodimer with RPP25 that binds to the P3 stem loop of the catalytic RNA.

The protein localises to the nucleus. The protein resides in the nucleolus. In terms of biological role, component of ribonuclease P, a ribonucleoprotein complex that generates mature tRNA molecules by cleaving their 5'-ends. Also a component of the MRP ribonuclease complex, which cleaves pre-rRNA sequences. The sequence is that of Ribonuclease P protein subunit p25 (Rpp25) from Rattus norvegicus (Rat).